Consider the following 365-residue polypeptide: Protein dbl-1 (365 aa).

The first 42 residues, 1 to 42, serve as a signal peptide directing secretion; the sequence is MNDSVRTTTTISSTKSLVHSFQLSAILHLFLLISFTPMSAAA. Residues 43–244 constitute a propeptide that is removed on maturation; the sequence is DQHASHATRR…KRSAQTGNSE (202 aa). 3 N-linked (GlcNAc...) asparagine glycosylation sites follow: Asn-110, Asn-143, and Asn-167. The segment at 231–259 is disordered; the sequence is SVRRKRSAQTGNSERKNRKKGRKHHNTEA. The span at 246–255 shows a compositional bias: basic residues; that stretch reads KNRKKGRKHH. Intrachain disulfides connect Cys-264/Cys-330, Cys-293/Cys-362, and Cys-297/Cys-364. An N-linked (GlcNAc...) asparagine glycan is attached at Asn-306.

This sequence belongs to the TGF-beta family. In terms of assembly, homodimer; disulfide-linked. Interacts with drag-1. As to expression, expressed in embryos just prior to hatching and remains constant in most cells throughout the larval and adult stages. Expressed by AVA command interneurons.

The protein resides in the secreted. Ligand for the serine/threonine-protein kinase receptor type-1 sma-6 which activates a TGF-beta-like signaling pathway. Multifunctional protein that is involved in body size, male ectodermal patterning, innate immunity, lipid metabolism and neural plasticity. Dose-dependent regulator of body size, probably influencing the sizes of some or all cells rather than their number. Plays a role in patterning of male-specific genital sensilla (simple sense organs), known as rays, and mating-associated structures, spicules. Plays a protective role in response to infection by the Gram-negative bacterium S.marcescens, by activating expression of genes involved in innate immunity. Regulator of lipid homeostasis, acting non cell-autonomously in the hypodermis; partly dependent on the Insulin/IGF-1-like signaling (IIS) mediated pathway. Required for aversive olfactory learning of pathogenic bacteria in adults. Involved in gland cell morphology, possibly via activation of a Smad-independent TGF-beta signaling pathway. Required to oppose the autoregulation of expression of Runt-related transcription factor rnt-1. This chain is Protein dbl-1, found in Caenorhabditis elegans.